Reading from the N-terminus, the 270-residue chain is Dermonecrotic toxin LsaSicTox-alphaIB1av (270 aa).

Residue His2 is part of the active site. Mg(2+) is bound by residues Glu22 and Asp24. The Nucleophile role is filled by His38. 2 disulfide bridges follow: Cys42-Cys48 and Cys44-Cys187. Residue Asp82 coordinates Mg(2+).

This sequence belongs to the arthropod phospholipase D family. Class II subfamily. The cofactor is Mg(2+). In terms of tissue distribution, expressed by the venom gland.

The protein localises to the secreted. The enzyme catalyses an N-(acyl)-sphingosylphosphocholine = an N-(acyl)-sphingosyl-1,3-cyclic phosphate + choline. It catalyses the reaction an N-(acyl)-sphingosylphosphoethanolamine = an N-(acyl)-sphingosyl-1,3-cyclic phosphate + ethanolamine. It carries out the reaction a 1-acyl-sn-glycero-3-phosphocholine = a 1-acyl-sn-glycero-2,3-cyclic phosphate + choline. The catalysed reaction is a 1-acyl-sn-glycero-3-phosphoethanolamine = a 1-acyl-sn-glycero-2,3-cyclic phosphate + ethanolamine. Functionally, dermonecrotic toxins cleave the phosphodiester linkage between the phosphate and headgroup of certain phospholipids (sphingolipid and lysolipid substrates), forming an alcohol (often choline) and a cyclic phosphate. This toxin acts on sphingomyelin (SM). It may also act on ceramide phosphoethanolamine (CPE), lysophosphatidylcholine (LPC) and lysophosphatidylethanolamine (LPE), but not on lysophosphatidylserine (LPS), and lysophosphatidylglycerol (LPG). It acts by transphosphatidylation, releasing exclusively cyclic phosphate products as second products. Induces dermonecrosis, hemolysis, increased vascular permeability, edema, inflammatory response, and platelet aggregation. In Loxosceles sabina (Tucson recluse spider), this protein is Dermonecrotic toxin LsaSicTox-alphaIB1av.